The primary structure comprises 297 residues: Protoheme IX farnesyltransferase 1 (297 aa).

9 consecutive transmembrane segments (helical) span residues 23–43 (VVVLMLITSLAGMFLATRAGV), 45–65 (WSVLLFGNLGIGLCAGGAAVV), 93–113 (LPALLFALALALLGMALLLAF), 117–137 (LTAWLTLASLLGYAVLYTGFL), 145–165 (IVIGGLAGAAPPLLGWVAVSG), 171–191 (PLLLVLIIFAWTPPHFWALAI), 216–236 (LHILLYTLILLAVSLLPYAIH), 241–261 (LYLACALVLGLRFLQWAWVLY), and 277–297 (IAYLFALFIALLLDHYLLLNL).

This sequence belongs to the UbiA prenyltransferase family. Protoheme IX farnesyltransferase subfamily.

It localises to the cell inner membrane. The enzyme catalyses heme b + (2E,6E)-farnesyl diphosphate + H2O = Fe(II)-heme o + diphosphate. The protein operates within porphyrin-containing compound metabolism; heme O biosynthesis; heme O from protoheme: step 1/1. In terms of biological role, converts heme B (protoheme IX) to heme O by substitution of the vinyl group on carbon 2 of heme B porphyrin ring with a hydroxyethyl farnesyl side group. This chain is Protoheme IX farnesyltransferase 1, found in Pseudomonas putida (strain GB-1).